The primary structure comprises 353 residues: Quinolinate synthase (353 aa).

Positions 47 and 68 each coordinate iminosuccinate. C113 contributes to the [4Fe-4S] cluster binding site. Iminosuccinate-binding positions include 139-141 (YAN) and S156. C200 is a binding site for [4Fe-4S] cluster. Residues 226-228 (HPE) and T243 contribute to the iminosuccinate site. [4Fe-4S] cluster is bound at residue C297.

Belongs to the quinolinate synthase family. Type 1 subfamily. Requires [4Fe-4S] cluster as cofactor.

Its subcellular location is the cytoplasm. The catalysed reaction is iminosuccinate + dihydroxyacetone phosphate = quinolinate + phosphate + 2 H2O + H(+). Its pathway is cofactor biosynthesis; NAD(+) biosynthesis; quinolinate from iminoaspartate: step 1/1. In terms of biological role, catalyzes the condensation of iminoaspartate with dihydroxyacetone phosphate to form quinolinate. The protein is Quinolinate synthase of Pectobacterium carotovorum subsp. carotovorum (strain PC1).